Consider the following 182-residue polypeptide: uncharacterized protein (182 aa).

Positions 66-133 form a coiled coil; it reads QKRKRREIKV…NLEIETNSDS (68 aa).

This is an uncharacterized protein from Acanthamoeba polyphaga (Amoeba).